A 277-amino-acid polypeptide reads, in one-letter code: Kallikrein-13 (277 aa).

Positions 1 to 16 (MWPLALVIASLTLALS) are cleaved as a signal peptide. N-linked (GlcNAc...) asparagine glycosylation is present at Asn-30. The Peptidase S1 domain occupies 36–263 (LPGGYTCFPH…YVLWIRETIR (228 aa)). Disulfide bonds link Cys-42/Cys-178, Cys-61/Cys-77, Cys-157/Cys-224, Cys-189/Cys-203, and Cys-214/Cys-239. Active-site charge relay system residues include His-76 and Asp-124. Ser-218 functions as the Charge relay system in the catalytic mechanism. N-linked (GlcNAc...) asparagine glycosylation is present at Asn-225.

Belongs to the peptidase S1 family. Kallikrein subfamily. Expressed in prostate, breast, testis and salivary gland.

It localises to the secreted. The polypeptide is Kallikrein-13 (KLK13) (Homo sapiens (Human)).